A 266-amino-acid chain; its full sequence is uncharacterized protein (266 aa).

Belongs to the chlamydial CPn_0087/CT3_09/TC_0583 family.

This is an uncharacterized protein from Chlamydia muridarum (strain MoPn / Nigg).